The following is a 369-amino-acid chain: UPF0284 protein cce_1085 (369 aa).

Belongs to the UPF0284 family.

This Crocosphaera subtropica (strain ATCC 51142 / BH68) (Cyanothece sp. (strain ATCC 51142)) protein is UPF0284 protein cce_1085.